The chain runs to 122 residues: MIQQESRLSVADNSGAKEVLVIRVLGGTGKRYASIGDKVVVTVKSAISSSNMKKGTVSKAVVVRTKKEVKRADGSYIRFSDNAAVLLNNNDEPRGTRIFGPVARELRDKQFMKIVSLAPEVL.

This sequence belongs to the universal ribosomal protein uL14 family. As to quaternary structure, part of the 50S ribosomal subunit. Forms a cluster with proteins L3 and L19. In the 70S ribosome, L14 and L19 interact and together make contacts with the 16S rRNA in bridges B5 and B8.

In terms of biological role, binds to 23S rRNA. Forms part of two intersubunit bridges in the 70S ribosome. This Cytophaga hutchinsonii (strain ATCC 33406 / DSM 1761 / CIP 103989 / NBRC 15051 / NCIMB 9469 / D465) protein is Large ribosomal subunit protein uL14.